Consider the following 133-residue polypeptide: Interferon-induced transmembrane protein 3 (133 aa).

Residues 1–57 (MNHTVQTFFSPVNSGQPPNYEMLKEEHEVAVLGAPHNPAPPTSTVIHIRSETSVPDH) lie on the Cytoplasmic side of the membrane. At Tyr-20 the chain carries Phosphotyrosine. Lys-24 is covalently cross-linked (Glycyl lysine isopeptide (Lys-Gly) (interchain with G-Cter in ubiquitin)). An intramembrane region (helical) is located at residues 58-78 (VVWSLFNTLFMNPCCLGFIAF). The interaction with SPP1 stretch occupies residues 60–93 (WSLFNTLFMNPCCLGFIAFAYSVKSRDRKMVGDV). 2 S-palmitoyl cysteine lipidation sites follow: Cys-71 and Cys-72. Residues 79-107 (AYSVKSRDRKMVGDVTGAQAYASTAKCLN) lie on the Cytoplasmic side of the membrane. Glycyl lysine isopeptide (Lys-Gly) (interchain with G-Cter in ubiquitin) cross-links involve residues Lys-83, Lys-88, and Lys-104. Cys-105 is lipidated: S-palmitoyl cysteine. The chain crosses the membrane as a helical span at residues 108 to 128 (IWALILGILMTILLIVIPVLI). Residues 108–133 (IWALILGILMTILLIVIPVLIFQAYG) form an interaction with VAPA region. The Extracellular segment spans residues 129–133 (FQAYG).

The protein belongs to the CD225/Dispanin family. In terms of assembly, interacts with ATP6V0B. Interacts with CD81. Interacts with SPP1; the interaction reduces OPN expression. Interacts with VAPA. Interacts with BRI3 (isoforms 1 and 2); the interaction with isoform 2 is weaker than with isoform 1. Palmitoylation on membrane-proximal cysteines controls clustering in membrane compartments and antiviral activity against influenza virus and hepatitis C virus (HCV). Has no effect on anti-SARS-CoV-2 activity. Post-translationally, not glycosylated. In terms of processing, polyubiquitinated with both 'Lys-48' and 'Lys-63' linkages. Ubiquitination negatively regulates antiviral activity. Lys-24 is the most prevalent ubiquitination site. Phosphorylation at Tyr-20 is required for endosomal and lysosomal location.

The protein localises to the cell membrane. Its subcellular location is the late endosome membrane. The protein resides in the early endosome membrane. It localises to the lysosome membrane. It is found in the cytoplasm. The protein localises to the perinuclear region. Its function is as follows. IFN-induced antiviral protein which disrupts intracellular cholesterol homeostasis. Inhibits the entry of viruses to the host cell cytoplasm by preventing viral fusion with cholesterol depleted endosomes. May inactivate new enveloped viruses which buds out of the infected cell, by letting them go out with a cholesterol depleted membrane. Active against multiple viruses, including influenza A virus, SARS coronaviruses (SARS-CoV and SARS-CoV-2), Marburg virus (MARV), Ebola virus (EBOV), Dengue virus (DNV), West Nile virus (WNV), human immunodeficiency virus type 1 (HIV-1), hepatitis C virus (HCV) and vesicular stomatitis virus (VSV). Can inhibit: influenza virus hemagglutinin protein-mediated viral entry, MARV and EBOV GP1,2-mediated viral entry, SARS-CoV and SARS-CoV-2 S protein-mediated viral entry and VSV G protein-mediated viral entry. Plays a critical role in the structural stability and function of vacuolar ATPase (v-ATPase). Establishes physical contact with the v-ATPase of endosomes which is critical for proper clathrin localization and is also required for the function of the v-ATPase to lower the pH in phagocytic endosomes thus establishing an antiviral state. In hepatocytes, IFITM proteins act in a coordinated manner to restrict HCV infection by targeting the endocytosed HCV virion for lysosomal degradation. IFITM2 and IFITM3 display anti-HCV activity that may complement the anti-HCV activity of IFITM1 by inhibiting the late stages of HCV entry, possibly in a coordinated manner by trapping the virion in the endosomal pathway and targeting it for degradation at the lysosome. Exerts opposing activities on SARS-CoV-2, including amphipathicity-dependent restriction of virus at endosomes and amphipathicity-independent enhancement of infection at the plasma membrane. In Homo sapiens (Human), this protein is Interferon-induced transmembrane protein 3.